The sequence spans 734 residues: Photosystem I P700 chlorophyll a apoprotein A2 (734 aa).

The next 8 helical transmembrane spans lie at 46–69 (IFASHFGQLAIIFLWTSGNLFHVA), 135–158 (LYTGALFLLFLSAISLIAGWLHLQ), 175–199 (LNHHLSGLFGVSSLAWTGHLVHVAI), 273–291 (IAHHHLAIAFLFLVAGHMY), 330–353 (IHFQLGLALASLGVITSLVAQHMY), 369–395 (AALYTHHQYIAGFIMTGAFAHGAIFFI), 417–439 (AIISHLSWVSLFLGFHTLGLYVH), and 517–535 (FLVHHAIALGLHTTTLILV). [4Fe-4S] cluster is bound by residues C559 and C568. 2 helical membrane-spanning segments follow: residues 575–596 (AFYLAVFWMLNTIGWVTFYWHW) and 643–665 (LSVWAWMFLFGHLVWATGFMFLI). Chlorophyll a is bound by residues H654, M662, and Y670. W671 contributes to the phylloquinone binding site. The helical transmembrane segment at 707–727 (LVGLAHFSVGYIFTYAAFLIA) threads the bilayer.

It belongs to the PsaA/PsaB family. The PsaA/B heterodimer binds the P700 chlorophyll special pair and subsequent electron acceptors. PSI consists of a core antenna complex that captures photons, and an electron transfer chain that converts photonic excitation into a charge separation. The eukaryotic PSI reaction center is composed of at least 11 subunits. P700 is a chlorophyll a/chlorophyll a' dimer, A0 is one or more chlorophyll a, A1 is one or both phylloquinones and FX is a shared 4Fe-4S iron-sulfur center. serves as cofactor.

The protein resides in the plastid. It localises to the chloroplast thylakoid membrane. It catalyses the reaction reduced [plastocyanin] + hnu + oxidized [2Fe-2S]-[ferredoxin] = oxidized [plastocyanin] + reduced [2Fe-2S]-[ferredoxin]. Its function is as follows. PsaA and PsaB bind P700, the primary electron donor of photosystem I (PSI), as well as the electron acceptors A0, A1 and FX. PSI is a plastocyanin-ferredoxin oxidoreductase, converting photonic excitation into a charge separation, which transfers an electron from the donor P700 chlorophyll pair to the spectroscopically characterized acceptors A0, A1, FX, FA and FB in turn. Oxidized P700 is reduced on the lumenal side of the thylakoid membrane by plastocyanin. In Pelargonium hortorum (Common geranium), this protein is Photosystem I P700 chlorophyll a apoprotein A2.